A 381-amino-acid chain; its full sequence is Cytochrome b (381 aa).

4 helical membrane passes run phenylalanine 34–methionine 54, tryptophan 78–isoleucine 99, tryptophan 114–leucine 134, and phenylalanine 179–leucine 199. The heme b site is built by histidine 84 and histidine 98. The heme b site is built by histidine 183 and histidine 197. A ubiquinone is bound at residue histidine 202. The next 4 membrane-spanning stretches (helical) occupy residues tyrosine 227–methionine 247, leucine 289–histidine 309, leucine 321–glycine 341, and phenylalanine 348–proline 368.

The protein belongs to the cytochrome b family. As to quaternary structure, the cytochrome bc1 complex contains 3 respiratory subunits (MT-CYB, CYC1 and UQCRFS1), 2 core proteins (UQCRC1 and UQCRC2) and probably 6 low-molecular weight proteins. It depends on heme b as a cofactor.

The protein resides in the mitochondrion inner membrane. Functionally, component of the ubiquinol-cytochrome c reductase complex (complex III or cytochrome b-c1 complex) that is part of the mitochondrial respiratory chain. The b-c1 complex mediates electron transfer from ubiquinol to cytochrome c. Contributes to the generation of a proton gradient across the mitochondrial membrane that is then used for ATP synthesis. The polypeptide is Cytochrome b (mt-cyb) (Sphyrna tiburo vespertina (Pacific bonnethead shark)).